Here is a 396-residue protein sequence, read N- to C-terminus: MIRTLDDLEADGTALGVRIDINSPLSSDGLADDARLRAHVDTVEELCRRDARVALLAHQGRPGGDEFSDLERHAERLDELLDAPVEYCDSTFSAEARTRIDELDPGRAVLLENTRFYSEEYMSFEPSAAAETYLVSRLAPALDAYVNDAFATAHRSQPSVVGFPERLPAYAGRVMERELDVLGNIESSPEPRVYVLGGAKVDDSIAVARSVLERGLADSVLTAGIVGNAFLLADGVSLGAASAAVVNERSHEAVKQAGDLLDDFSHRIYMPRDVAVENDAGERVEHDLEDLPASTPAMDIGARTVAAYANILDDAGTAILNGPAGVFEDDRFETGTLELYKSATRAEQSIVGGGDTASALRKLGILEDFDHVSTGGGAALNMLTGETLVGVEALRE.

Residues 20–22 (DIN), Arg-35, 58–61 (HQGR), Arg-115, and Arg-155 each bind substrate. Residues Glu-328 and 353–356 (GGDT) each bind ATP.

This sequence belongs to the phosphoglycerate kinase family. Monomer.

The protein resides in the cytoplasm. The enzyme catalyses (2R)-3-phosphoglycerate + ATP = (2R)-3-phospho-glyceroyl phosphate + ADP. Its pathway is carbohydrate degradation; glycolysis; pyruvate from D-glyceraldehyde 3-phosphate: step 2/5. The sequence is that of Phosphoglycerate kinase from Natronomonas pharaonis (strain ATCC 35678 / DSM 2160 / CIP 103997 / JCM 8858 / NBRC 14720 / NCIMB 2260 / Gabara) (Halobacterium pharaonis).